Here is a 270-residue protein sequence, read N- to C-terminus: Bifunctional folate synthesis protein (270 aa).

The interval methionine 1–lysine 119 is DHNA. Substrate is bound by residues glutamate 21, tyrosine 53, and isoleucine 72–glutamate 73. Residue lysine 99 is the Proton donor/acceptor; for DHNA activity of the active site. The segment at glutamine 120–lysine 270 is HPPK. Residues threonine 160 to tryptophan 163, phenylalanine 171 to asparagine 173, leucine 192 to glutamate 195, arginine 200 to leucine 215, aspartate 227 to proline 233, and arginine 238 to phenylalanine 240 each bind ATP. 2 residues coordinate Mg(2+): aspartate 212 and aspartate 214.

It in the N-terminal section; belongs to the DHNA family. The protein in the C-terminal section; belongs to the HPPK family. Homotrimer or homotetramer.

It catalyses the reaction 7,8-dihydroneopterin = 6-hydroxymethyl-7,8-dihydropterin + glycolaldehyde. It carries out the reaction 6-hydroxymethyl-7,8-dihydropterin + ATP = (7,8-dihydropterin-6-yl)methyl diphosphate + AMP + H(+). It functions in the pathway cofactor biosynthesis; tetrahydrofolate biosynthesis; 2-amino-4-hydroxy-6-hydroxymethyl-7,8-dihydropteridine diphosphate from 7,8-dihydroneopterin triphosphate: step 3/4. It participates in cofactor biosynthesis; tetrahydrofolate biosynthesis; 2-amino-4-hydroxy-6-hydroxymethyl-7,8-dihydropteridine diphosphate from 7,8-dihydroneopterin triphosphate: step 4/4. Its function is as follows. Catalyzes two sequential steps of tetrahydrofolate biosynthesis, the conversion of 7,8-dihydroneopterin to 6-hydroxymethyl-7,8-dihydropterin diphosphate. This chain is Bifunctional folate synthesis protein, found in Streptococcus pneumoniae serotype 4 (strain ATCC BAA-334 / TIGR4).